The sequence spans 554 residues: Potassium-transporting ATPase potassium-binding subunit (554 aa).

The next 10 helical transmembrane spans lie at 1 to 21 (MSPV…LALA), 60 to 80 (PAYL…LYVL), 131 to 151 (GLAV…VALV), 174 to 194 (VRVL…CGAI), 246 to 266 (PGPF…FALT), 279 to 299 (GYAI…LMMW), 375 to 395 (GLYG…LMVG), 412 to 432 (FAAC…AAAM), 481 to 501 (IGIV…ALAG), and 525 to 545 (GLLV…ALAL).

Belongs to the KdpA family. The system is composed of three essential subunits: KdpA, KdpB and KdpC.

The protein localises to the cell membrane. Part of the high-affinity ATP-driven potassium transport (or Kdp) system, which catalyzes the hydrolysis of ATP coupled with the electrogenic transport of potassium into the cytoplasm. This subunit binds the extracellular potassium ions and delivers the ions to the membrane domain of KdpB through an intramembrane tunnel. This chain is Potassium-transporting ATPase potassium-binding subunit, found in Streptomyces avermitilis (strain ATCC 31267 / DSM 46492 / JCM 5070 / NBRC 14893 / NCIMB 12804 / NRRL 8165 / MA-4680).